Consider the following 152-residue polypeptide: B3 domain-containing protein At1g10455 (152 aa).

The TF-B3 DNA-binding region spans 24–131 (LKKKLSDSDL…EVKFKHFKSQ (108 aa)).

It is found in the nucleus. The polypeptide is B3 domain-containing protein At1g10455 (Arabidopsis thaliana (Mouse-ear cress)).